The primary structure comprises 257 residues: Imidazole glycerol phosphate synthase subunit HisF (257 aa).

Residues Asp-11 and Asp-130 contribute to the active site.

The protein belongs to the HisA/HisF family. Heterodimer of HisH and HisF.

It is found in the cytoplasm. The enzyme catalyses 5-[(5-phospho-1-deoxy-D-ribulos-1-ylimino)methylamino]-1-(5-phospho-beta-D-ribosyl)imidazole-4-carboxamide + L-glutamine = D-erythro-1-(imidazol-4-yl)glycerol 3-phosphate + 5-amino-1-(5-phospho-beta-D-ribosyl)imidazole-4-carboxamide + L-glutamate + H(+). The protein operates within amino-acid biosynthesis; L-histidine biosynthesis; L-histidine from 5-phospho-alpha-D-ribose 1-diphosphate: step 5/9. Its function is as follows. IGPS catalyzes the conversion of PRFAR and glutamine to IGP, AICAR and glutamate. The HisF subunit catalyzes the cyclization activity that produces IGP and AICAR from PRFAR using the ammonia provided by the HisH subunit. This Shewanella sp. (strain MR-4) protein is Imidazole glycerol phosphate synthase subunit HisF.